A 269-amino-acid chain; its full sequence is 5'-nucleotidase SurE (269 aa).

A divalent metal cation contacts are provided by D8, D9, S40, and N95.

This sequence belongs to the SurE nucleotidase family. A divalent metal cation serves as cofactor.

It is found in the cytoplasm. The catalysed reaction is a ribonucleoside 5'-phosphate + H2O = a ribonucleoside + phosphate. In terms of biological role, nucleotidase that shows phosphatase activity on nucleoside 5'-monophosphates. This chain is 5'-nucleotidase SurE, found in Nitratidesulfovibrio vulgaris (strain DSM 19637 / Miyazaki F) (Desulfovibrio vulgaris).